We begin with the raw amino-acid sequence, 480 residues long: Probable glycine dehydrogenase (decarboxylating) subunit 2 (480 aa).

Residue K265 is modified to N6-(pyridoxal phosphate)lysine.

The protein belongs to the GcvP family. C-terminal subunit subfamily. As to quaternary structure, the glycine cleavage system is composed of four proteins: P, T, L and H. In this organism, the P 'protein' is a heterodimer of two subunits. Pyridoxal 5'-phosphate is required as a cofactor.

It carries out the reaction N(6)-[(R)-lipoyl]-L-lysyl-[glycine-cleavage complex H protein] + glycine + H(+) = N(6)-[(R)-S(8)-aminomethyldihydrolipoyl]-L-lysyl-[glycine-cleavage complex H protein] + CO2. Its function is as follows. The glycine cleavage system catalyzes the degradation of glycine. The P protein binds the alpha-amino group of glycine through its pyridoxal phosphate cofactor; CO(2) is released and the remaining methylamine moiety is then transferred to the lipoamide cofactor of the H protein. The sequence is that of Probable glycine dehydrogenase (decarboxylating) subunit 2 from Thermosipho africanus (strain TCF52B).